The chain runs to 282 residues: Undecaprenyl-diphosphatase (282 aa).

7 helical membrane passes run 45-65 (AFME…VVFI), 86-106 (WQLW…GIPL), 114-134 (FHNF…FILI), 151-171 (LPYK…FPGT), 196-216 (FFLG…KFIL), 224-244 (GQLT…MYVI), and 256-276 (FTVF…YWVF).

Belongs to the UppP family.

Its subcellular location is the cell membrane. The enzyme catalyses di-trans,octa-cis-undecaprenyl diphosphate + H2O = di-trans,octa-cis-undecaprenyl phosphate + phosphate + H(+). Its function is as follows. Catalyzes the dephosphorylation of undecaprenyl diphosphate (UPP). Confers resistance to bacitracin. The chain is Undecaprenyl-diphosphatase from Streptococcus gordonii (strain Challis / ATCC 35105 / BCRC 15272 / CH1 / DL1 / V288).